Reading from the N-terminus, the 50-residue chain is Large ribosomal subunit protein eL40 (50 aa).

This sequence belongs to the eukaryotic ribosomal protein eL40 family.

The sequence is that of Large ribosomal subunit protein eL40 from Aeropyrum pernix (strain ATCC 700893 / DSM 11879 / JCM 9820 / NBRC 100138 / K1).